Reading from the N-terminus, the 289-residue chain is Purine nucleoside phosphorylase (289 aa).

Position 1 is an N-acetylmethionine (Met-1). Phosphate-binding positions include Ser-33, His-64, and 84–86; that span reads RFH. Tyr-88 is a binding site for a purine D-ribonucleoside. Ala-116 is a phosphate binding site. A purine D-ribonucleoside-binding residues include Glu-201 and Met-219. Phosphate is bound at residue Ser-220. Asn-243 and His-257 together coordinate a purine D-ribonucleoside.

The protein belongs to the PNP/MTAP phosphorylase family. As to quaternary structure, homotrimer.

It localises to the cytoplasm. The catalysed reaction is inosine + phosphate = alpha-D-ribose 1-phosphate + hypoxanthine. It catalyses the reaction guanosine + phosphate = alpha-D-ribose 1-phosphate + guanine. It carries out the reaction 2'-deoxyguanosine + phosphate = 2-deoxy-alpha-D-ribose 1-phosphate + guanine. The enzyme catalyses 2'-deoxyinosine + phosphate = 2-deoxy-alpha-D-ribose 1-phosphate + hypoxanthine. Its pathway is purine metabolism; purine nucleoside salvage. In terms of biological role, catalyzes the phosphorolytic breakdown of the N-glycosidic bond in the beta-(deoxy)ribonucleoside molecules, with the formation of the corresponding free purine bases and pentose-1-phosphate. Preferentially acts on 6-oxopurine nucleosides including inosine and guanosine. The protein is Purine nucleoside phosphorylase (Pnp) of Mus musculus (Mouse).